The following is a 509-amino-acid chain: Flotillin-like protein FloT (509 aa).

Over 1–3 the chain is Cytoplasmic; sequence MTM. Residues 4 to 24 lie within the membrane without spanning it; it reads PIIMIIGVVFFLLIALIAVFI. Residues 25-509 are Cytoplasmic-facing; sequence TKYRTAGPDE…KEAKTIQKSE (485 aa). The interval 119 to 301 is PHB domain; it reads AAEQFLGKSK…KIIERQKQIE (183 aa). Residues 203–509 form a required for correct localization region; it reads RIAQVKRDAD…KEAKTIQKSE (307 aa). 4 consecutive short sequence motifs (EA repeat) follow at residues 342–344, 357–360, 370–373, and 390–394; these read AEA, AEAE, and AEAEA. A not required for correct localization region spans residues 485–509; it reads KGNVKQSINELTNEIKEAKTIQKSE.

The protein belongs to the band 7/mec-2 family. Flotillin subfamily. As to quaternary structure, homooligomerizes. Oligomerizes in very large complexes in vitro. Interacts with FloA, FtsH, FtsX, OppA, SdhA and SecY in detergent-resistant membrane (DRM) fractions. Interacts with FtsH at midcell. Interacts with FloA. Interacts in vivo with KinC, FloA, FtsH and ResE. Interacts with ResE, colocalizes with ResE in FloT-only membrane rafts. Another study shows nearly complete colocalization with NfeD2, but only minor colocalization with FtsH or KinC.

The protein localises to the cell membrane. Its subcellular location is the membrane raft. In terms of biological role, found in functional membrane microdomains (FMM) that may be equivalent to eukaryotic membrane rafts. FMMs are highly dynamic and increase in number as cells age. FloA and FloT function is partially redundant; double deletions have marked synthetic phenotypes. Flotillins are thought to be important factors in membrane fluidity, especially during periods of rapid growth in rich media. Whether specific proteins are associated with FMMs is controversial; in one study FloT rafts have been shown to include proteins involved in adaptation to stationary phase, while FloA-FloT rafts include proteins involved in differentiation including sporulation, biofilm formation and DNA uptake competence. Another (more finely resolved) study only showed association of NfeD2 with FloT rafts of all the proteins examined. Aids homooligomerization of KinC and KinD but not KinB, may prevent incorrect hetero-association of the above kinases. Simultaneous overexpression of both FloA and FloT leads to defects in cell division and differentiation, in part caused by stabilization of FtsH and its subsequent increased ability to degrade proteins. Cells make more biofilm, are about half as long, have less EzrA and more frequent Z-rings. Involved in spatial organization of membranes, perhaps recruiting proteins (e.g. NfeD2) to specific membrane regions. Plays a role in phosphorylation of master regulator Spo0A, an early sporulation event. Plays a non-redundant role with dynamin-like protein A (dynA) in membrane dynamics and cell shape. This is Flotillin-like protein FloT from Bacillus subtilis (strain 168).